Reading from the N-terminus, the 512-residue chain is Solute carrier family 40 member 2 (512 aa).

The interval 1-28 (MEEETETRVFLSNEQHQEEEEEEEEEPS) is disordered. Residues 17-27 (QEEEEEEEEEP) are compositionally biased toward acidic residues. The next 11 membrane-spanning stretches (helical) occupy residues 55 to 75 (VALYMIYLWPNSLFLTAMYGV), 105 to 125 (LVTQNLSFIVAGGAVVALLVV), 133 to 153 (FPVFATLVVLTNLSGAIGVLS), 187 to 207 (GIDLSSKLLSPVITGLIISFV), 214 to 234 (ITFAAWATITVWIEYWLFISV), 310 to 330 (IVLPGVSLALLFFTVLSFGTL), 343 to 363 (YIIGIGRGISAGVGLAATVLY), 376 to 396 (GVWSFWSQWTCLLVCVGSIWV), 405 to 425 (MLMAGVAASRLGLWMFDLAVI), 442 to 462 (GVQNSLQSALDLMANLLGIIV), and 468 to 488 (FWMLTLISFATVSLAGILYTI).

This sequence belongs to the ferroportin (FP) (TC 2.A.100) family. SLC40A subfamily.

It is found in the vacuole membrane. Vacuolar transporter that is involved in the transport of excess nickel into the vacuole under iron deficiency, increasing cellular tolerance to nickel under iron deficiency stress response. This is Solute carrier family 40 member 2 (IREG2) from Arabidopsis thaliana (Mouse-ear cress).